Reading from the N-terminus, the 248-residue chain is Putative amino-acid ABC transporter-binding protein PatH (248 aa).

The N-terminal stretch at 1–21 is a signal peptide; sequence MKNWIKVAVAAIALSAATVQA.

It belongs to the bacterial solute-binding protein 3 family.

Its subcellular location is the periplasm. In terms of biological role, probably part of a binding-protein-dependent transport system for an amino acid. The sequence is that of Putative amino-acid ABC transporter-binding protein PatH (patH) from Vibrio harveyi (Beneckea harveyi).